A 417-amino-acid chain; its full sequence is Phosphoglycerate kinase (417 aa).

Val-23, Asp-24, Phe-25, Asn-26, Gln-39, Arg-40, Ser-63, His-64, Gly-66, Arg-67, Leu-122, Arg-123, His-170, and Arg-171 together coordinate (2R)-3-phosphoglycerate. Gly-214 is a binding site for ADP. Gly-214 serves as a coordination point for CDP. AMP-binding residues include Ala-215 and Lys-216. Residue Ala-215 coordinates ATP. Mg(2+) is bound at residue Ala-215. Asp-219 is a binding site for CDP. Asp-219 contacts Mg(2+). Lys-220 lines the AMP pocket. ATP is bound at residue Lys-220. Gly-238 contributes to the ADP binding site. Gly-238 contacts CDP. Gly-239 and Gly-313 together coordinate AMP. ATP-binding residues include Gly-239 and Gly-313. The CDP site is built by Gly-338 and Phe-343. Phe-343 is an ADP binding site. Residue Glu-344 participates in AMP binding. ATP is bound by residues Glu-344, Asp-375, and Thr-376. Asp-375 contributes to the Mg(2+) binding site.

Belongs to the phosphoglycerate kinase family. Monomer. Mg(2+) serves as cofactor.

It is found in the cytoplasm. It localises to the mitochondrion. The catalysed reaction is (2R)-3-phosphoglycerate + ATP = (2R)-3-phospho-glyceroyl phosphate + ADP. Its pathway is carbohydrate degradation; glycolysis; pyruvate from D-glyceraldehyde 3-phosphate: step 2/5. Functionally, catalyzes one of the two ATP producing reactions in the glycolytic pathway via the reversible conversion of 1,3-diphosphoglycerate to 3-phosphoglycerate. Both L- and D- forms of purine and pyrimidine nucleotides can be used as substrates, but the activity is much lower on pyrimidines. Negatively regulates the biosynthesis of acetyl-CoA from pyruvate in the mitochondrion. This Penicillium citrinum protein is Phosphoglycerate kinase (PGKA).